The primary structure comprises 184 residues: MINAINLPISLNNGPPAGGFGLNTNIFEINIINLGIVIGLLVYLGEGVLTNLLVNRKQTILSTIRDAEERYREATDKLKQARARLQQAKVKAGEIRSNGLARMEREKQDLINAADEDSKRLEESKNSTIRFEEQRAIEQVRQQVSRLALERVLESLKSRFNSELHSRMIDYHIDLIKSMEGTTD.

Residues 29 to 49 traverse the membrane as a helical segment; sequence INIINLGIVIGLLVYLGEGVL.

This sequence belongs to the ATPase B chain family. F-type ATPases have 2 components, F(1) - the catalytic core - and F(0) - the membrane proton channel. F(1) has five subunits: alpha(3), beta(3), gamma(1), delta(1), epsilon(1). F(0) has four main subunits: a(1), b(1), b'(1) and c(10-14). The alpha and beta chains form an alternating ring which encloses part of the gamma chain. F(1) is attached to F(0) by a central stalk formed by the gamma and epsilon chains, while a peripheral stalk is formed by the delta, b and b' chains.

It localises to the plastid. The protein localises to the chloroplast thylakoid membrane. In terms of biological role, f(1)F(0) ATP synthase produces ATP from ADP in the presence of a proton or sodium gradient. F-type ATPases consist of two structural domains, F(1) containing the extramembraneous catalytic core and F(0) containing the membrane proton channel, linked together by a central stalk and a peripheral stalk. During catalysis, ATP synthesis in the catalytic domain of F(1) is coupled via a rotary mechanism of the central stalk subunits to proton translocation. Component of the F(0) channel, it forms part of the peripheral stalk, linking F(1) to F(0). The polypeptide is ATP synthase subunit b, chloroplastic (Psilotum nudum (Whisk fern)).